We begin with the raw amino-acid sequence, 126 residues long: Histone H2B type 1-K (126 aa).

A compositionally biased stretch (low complexity) spans 1–12; it reads MPEPAKSAPAPK. The tract at residues 1-36 is disordered; the sequence is MPEPAKSAPAPKKGSKKAVTKAQKKDGKKRKRSRKE. Pro2 is modified (N-acetylproline). Glu3 is modified (ADP-ribosyl glutamic acid). Lys6 carries the N6-(2-hydroxyisobutyryl)lysine; alternate modification. Lys6 is subject to N6-(beta-hydroxybutyryl)lysine; alternate. The residue at position 6 (Lys6) is an N6-acetyllysine; alternate. Lys6 bears the N6-butyryllysine; alternate mark. Lys6 bears the N6-crotonyllysine; alternate mark. Lys6 is subject to N6-lactoyllysine; alternate. A Glycyl lysine isopeptide (Lys-Gly) (interchain with G-Cter in SUMO2); alternate cross-link involves residue Lys6. Ser7 carries the ADP-ribosylserine modification. An N6-(beta-hydroxybutyryl)lysine; alternate modification is found at Lys12. An N6-acetyllysine; alternate mark is found at Lys12 and Lys13. 2 positions are modified to N6-crotonyllysine; alternate: Lys12 and Lys13. Lys12 is subject to N6-lactoyllysine; alternate. The residue at position 13 (Lys13) is an N6-(2-hydroxyisobutyryl)lysine; alternate. A Phosphoserine; by STK4/MST1 modification is found at Ser15. 4 positions are modified to N6-acetyllysine; alternate: Lys16, Lys17, Lys21, and Lys24. 4 positions are modified to N6-crotonyllysine; alternate: Lys16, Lys17, Lys21, and Lys24. N6-lactoyllysine; alternate is present on residues Lys16, Lys17, Lys21, and Lys24. N6-glutaryllysine; alternate is present on Lys17. Residues Lys21 and Lys24 each carry the N6-(2-hydroxyisobutyryl)lysine; alternate modification. At Lys21 the chain carries N6-(beta-hydroxybutyryl)lysine; alternate. Lys21 carries the N6-butyryllysine; alternate modification. Lys21 is covalently cross-linked (Glycyl lysine isopeptide (Lys-Gly) (interchain with G-Cter in SUMO2); alternate). The residue at position 25 (Lys25) is an N6-(2-hydroxyisobutyryl)lysine. Lys35 bears the N6-(2-hydroxyisobutyryl)lysine; alternate mark. Lys35 carries the post-translational modification N6-(beta-hydroxybutyryl)lysine; alternate. N6-crotonyllysine; alternate is present on Lys35. Lys35 bears the N6-glutaryllysine; alternate mark. Residue Lys35 is modified to N6-succinyllysine; alternate. Residue Lys35 forms a Glycyl lysine isopeptide (Lys-Gly) (interchain with G-Cter in ubiquitin); alternate linkage. Glu36 carries the post-translational modification PolyADP-ribosyl glutamic acid. Ser37 carries the phosphoserine; by AMPK modification. Lys44, Lys47, and Lys58 each carry N6-(2-hydroxyisobutyryl)lysine; alternate. N6-lactoyllysine; alternate is present on Lys44. N6-glutaryllysine; alternate is present on residues Lys44 and Lys47. Lys47 is modified (N6-methyllysine; alternate). N6,N6-dimethyllysine; alternate is present on Lys58. Position 80 is a dimethylated arginine (Arg80). Lys86 is modified (N6-(2-hydroxyisobutyryl)lysine; alternate). Lys86 bears the N6-acetyllysine; alternate mark. Lys86 carries the N6-lactoyllysine; alternate modification. Lys86 carries the N6,N6,N6-trimethyllysine; alternate modification. Arg87 and Arg93 each carry omega-N-methylarginine. Lys109 carries the N6-(2-hydroxyisobutyryl)lysine; alternate modification. An N6-lactoyllysine; alternate modification is found at Lys109. Lys109 carries the post-translational modification N6-glutaryllysine; alternate. Residue Lys109 is modified to N6-methyllysine; alternate. O-linked (GlcNAc) serine glycosylation occurs at Ser113. Thr116 is modified (phosphothreonine). Lys117 and Lys121 each carry N6-(2-hydroxyisobutyryl)lysine; alternate. At Lys117 the chain carries N6-(beta-hydroxybutyryl)lysine; alternate. N6-lactoyllysine; alternate occurs at positions 117 and 121. N6-glutaryllysine; alternate is present on residues Lys117 and Lys121. Residues Lys117 and Lys121 each carry the N6-succinyllysine; alternate modification. Position 117 is an N6-methylated lysine; alternate (Lys117). Lys121 is covalently cross-linked (Glycyl lysine isopeptide (Lys-Gly) (interchain with G-Cter in ubiquitin); alternate).

This sequence belongs to the histone H2B family. The nucleosome is a histone octamer containing two molecules each of H2A, H2B, H3 and H4 assembled in one H3-H4 heterotetramer and two H2A-H2B heterodimers. The octamer wraps approximately 147 bp of DNA. Monoubiquitination at Lys-35 (H2BK34Ub) by the MSL1/MSL2 dimer is required for histone H3 'Lys-4' (H3K4me) and 'Lys-79' (H3K79me) methylation and transcription activation at specific gene loci, such as HOXA9 and MEIS1 loci. Similarly, monoubiquitination at Lys-121 (H2BK120Ub) by the RNF20/40 complex gives a specific tag for epigenetic transcriptional activation and is also prerequisite for histone H3 'Lys-4' and 'Lys-79' methylation. It also functions cooperatively with the FACT dimer to stimulate elongation by RNA polymerase II. H2BK120Ub also acts as a regulator of mRNA splicing: deubiquitination by USP49 is required for efficient cotranscriptional splicing of a large set of exons. In terms of processing, phosphorylated on Ser-15 (H2BS14ph) by STK4/MST1 during apoptosis; which facilitates apoptotic chromatin condensation. Also phosphorylated on Ser-15 in response to DNA double strand breaks (DSBs), and in correlation with somatic hypermutation and immunoglobulin class-switch recombination. Phosphorylation at Ser-37 (H2BS36ph) by AMPK in response to stress promotes transcription. Post-translationally, glcNAcylation at Ser-113 promotes monoubiquitination of Lys-121. It fluctuates in response to extracellular glucose, and associates with transcribed genes. ADP-ribosylated by PARP1 or PARP2 on Ser-7 (H2BS6ADPr) in response to DNA damage. H2BS6ADPr promotes recruitment of CHD1L. Mono-ADP-ribosylated on Glu-3 (H2BE2ADPr) by PARP3 in response to single-strand breaks. Poly ADP-ribosylation on Glu-36 (H2BE35ADPr) by PARP1 regulates adipogenesis: it inhibits phosphorylation at Ser-37 (H2BS36ph), thereby blocking expression of pro-adipogenetic genes. In terms of processing, crotonylation (Kcr) is specifically present in male germ cells and marks testis-specific genes in post-meiotic cells, including X-linked genes that escape sex chromosome inactivation in haploid cells. Crotonylation marks active promoters and enhancers and confers resistance to transcriptional repressors. It is also associated with post-meiotically activated genes on autosomes. Post-translationally, lactylated in macrophages by EP300/P300 by using lactoyl-CoA directly derived from endogenous or exogenous lactate, leading to stimulates gene transcription.

It is found in the nucleus. The protein localises to the chromosome. Its function is as follows. Core component of nucleosome. Nucleosomes wrap and compact DNA into chromatin, limiting DNA accessibility to the cellular machineries which require DNA as a template. Histones thereby play a central role in transcription regulation, DNA repair, DNA replication and chromosomal stability. DNA accessibility is regulated via a complex set of post-translational modifications of histones, also called histone code, and nucleosome remodeling. This Macaca fascicularis (Crab-eating macaque) protein is Histone H2B type 1-K.